A 98-amino-acid polypeptide reads, in one-letter code: NADH-ubiquinone oxidoreductase chain 4L (98 aa).

3 consecutive transmembrane segments (helical) span residues 1–21 (MSMVYMNIMLAFTMSLIGLLM), 29–49 (SLLCLEGMMLSLFVMASLMIL), and 61–81 (IILLVFAACEAALGLALLVMI).

This sequence belongs to the complex I subunit 4L family. Core subunit of respiratory chain NADH dehydrogenase (Complex I) which is composed of 45 different subunits.

Its subcellular location is the mitochondrion inner membrane. The catalysed reaction is a ubiquinone + NADH + 5 H(+)(in) = a ubiquinol + NAD(+) + 4 H(+)(out). Functionally, core subunit of the mitochondrial membrane respiratory chain NADH dehydrogenase (Complex I) which catalyzes electron transfer from NADH through the respiratory chain, using ubiquinone as an electron acceptor. Part of the enzyme membrane arm which is embedded in the lipid bilayer and involved in proton translocation. The polypeptide is NADH-ubiquinone oxidoreductase chain 4L (MT-ND4L) (Vicugna pacos (Alpaca)).